A 307-amino-acid chain; its full sequence is UDP-3-O-acyl-N-acetylglucosamine deacetylase (307 aa).

Positions 78, 241, and 245 each coordinate Zn(2+). The Proton donor role is filled by H268.

Belongs to the LpxC family. Zn(2+) is required as a cofactor.

The catalysed reaction is a UDP-3-O-[(3R)-3-hydroxyacyl]-N-acetyl-alpha-D-glucosamine + H2O = a UDP-3-O-[(3R)-3-hydroxyacyl]-alpha-D-glucosamine + acetate. Its pathway is glycolipid biosynthesis; lipid IV(A) biosynthesis; lipid IV(A) from (3R)-3-hydroxytetradecanoyl-[acyl-carrier-protein] and UDP-N-acetyl-alpha-D-glucosamine: step 2/6. In terms of biological role, catalyzes the hydrolysis of UDP-3-O-myristoyl-N-acetylglucosamine to form UDP-3-O-myristoylglucosamine and acetate, the committed step in lipid A biosynthesis. The protein is UDP-3-O-acyl-N-acetylglucosamine deacetylase of Acidovorax sp. (strain JS42).